We begin with the raw amino-acid sequence, 811 residues long: Receptor-like protein 46 (811 aa).

Positions 1–21 (MSKQCLLSCFLFFCFFIPQLS) are cleaved as a signal peptide. Residues 22-782 (FSCPQDQRQS…EEEDKEEEET (761 aa)) lie on the Extracellular side of the membrane. N-linked (GlcNAc...) asparagine glycans are attached at residues Asn-46, Asn-71, Asn-128, and Asn-143. 24 LRR repeats span residues 104–128 (INSLVGLDVSFNNIQGEIPGYAFVN), 129–153 (LTSLISLDMCCNRFNGSIPHELFSL), 155–177 (NLQRLDLSRNVIGGTLSGDIKEL), 178–201 (KNLQELILDENLIGGAIPSEIGSL), 203–225 (ELLTLTLRQNMFNSSIPSSVSRL), 226–249 (TKLKTIDLQNNFLSSKIPDDIGNL), 251–273 (NLSTLSLSMNKLSGGIPSSIHNL), 275–298 (NLETLQLENNNGLSGEIPAAWLFG), 299–322 (LQKLKVLRLEGNNKLQWNNNGYVF), 324–348 (QFKLTHLSLRSCGLEGNIPDWLKNQ), 349–369 (TALVYLDLSINRLEGRFPKWL), 370–395 (ADLKIRNITLSDNRLTGSLPPNLFQR), 397–419 (SLYYLVLSRNNFSGQIPDTIGES), 421–442 (VMVLMLSENNFSGSVPKSITKI), 443–466 (PFLKLLDLSKNRLSGEFPRFRPES), 468–488 (LEWLDISSNEFSGDVPAYFGG), 490–510 (TSMLLMSQNNFSGEFPQNFRN), 511–534 (LSYLIRLDLHDNKISGTVASLISQ), 536–560 (SSSVEVLSLRNNSLKGSIPEGISNL), 561–583 (TSLKVLDLSENNLDGYLPSSLGN), 643–665 (LYTLLDLSKNKLHGEIPTSLGNL), 666–688 (KSLKVLNLSNNEFSGLIPQSFGD), 690–713 (EKVESLDLSHNNLTGEIPKTLSKL), and 714–738 (SELNTLDLRNNKLKGRIPESPQLDR). N-linked (GlcNAc...) asparagine glycosylation is present at Asn-215. N-linked (GlcNAc...) asparagine glycosylation occurs at Asn-251. A glycan (N-linked (GlcNAc...) asparagine) is linked at Asn-347. Asn-376, Asn-407, and Asn-430 each carry an N-linked (GlcNAc...) asparagine glycan. N-linked (GlcNAc...) asparagine glycosylation is found at Asn-499 and Asn-510. N-linked (GlcNAc...) asparagine glycans are attached at residues Asn-546, Asn-559, and Asn-583. Asn-672 and Asn-701 each carry an N-linked (GlcNAc...) asparagine glycan. The N-linked (GlcNAc...) asparagine glycan is linked to Asn-747. A helical transmembrane segment spans residues 783 to 803 (IFSWNAAAIGCSCGFLIAVVF). Over 804–811 (MSYNELWK) the chain is Cytoplasmic.

This sequence belongs to the RLP family.

The protein localises to the cell membrane. The sequence is that of Receptor-like protein 46 from Arabidopsis thaliana (Mouse-ear cress).